The following is a 471-amino-acid chain: Glutamate--tRNA ligase (471 aa).

The short motif at 9–19 (PSPTGYLHVGG) is the 'HIGH' region element. Zn(2+)-binding residues include cysteine 98, cysteine 100, cysteine 125, and histidine 127. Positions 237–241 (KLSKR) match the 'KMSKS' region motif. Residue lysine 240 participates in ATP binding.

The protein belongs to the class-I aminoacyl-tRNA synthetase family. Glutamate--tRNA ligase type 1 subfamily. In terms of assembly, monomer. Zn(2+) serves as cofactor.

Its subcellular location is the cytoplasm. It catalyses the reaction tRNA(Glu) + L-glutamate + ATP = L-glutamyl-tRNA(Glu) + AMP + diphosphate. Its function is as follows. Catalyzes the attachment of glutamate to tRNA(Glu) in a two-step reaction: glutamate is first activated by ATP to form Glu-AMP and then transferred to the acceptor end of tRNA(Glu). The sequence is that of Glutamate--tRNA ligase from Salmonella arizonae (strain ATCC BAA-731 / CDC346-86 / RSK2980).